Here is a 115-residue protein sequence, read N- to C-terminus: NADH-ubiquinone oxidoreductase chain 3 (115 aa).

The next 3 membrane-spanning stretches (helical) occupy residues 3-23, 55-75, and 87-107; these read LVIA…VAFW, FFLV…LLPI, and LLSL…YEWL.

Belongs to the complex I subunit 3 family. As to quaternary structure, core subunit of respiratory chain NADH dehydrogenase (Complex I) which is composed of 45 different subunits. Interacts with TMEM186. Interacts with TMEM242.

The protein resides in the mitochondrion inner membrane. It catalyses the reaction a ubiquinone + NADH + 5 H(+)(in) = a ubiquinol + NAD(+) + 4 H(+)(out). Functionally, core subunit of the mitochondrial membrane respiratory chain NADH dehydrogenase (Complex I) which catalyzes electron transfer from NADH through the respiratory chain, using ubiquinone as an electron acceptor. Essential for the catalytic activity of complex I. The sequence is that of NADH-ubiquinone oxidoreductase chain 3 from Ornithorhynchus anatinus (Duckbill platypus).